The primary structure comprises 299 residues: Protoheme IX farnesyltransferase (299 aa).

Helical transmembrane passes span 25-45 (IVSL…PDLA), 51-71 (LFGT…NHLI), 97-117 (ALAF…FLVN), 119-139 (LTAW…TAFL), 147-167 (IVLG…AVTG), 173-193 (AFLL…ALAL), 225-245 (FLLF…LLYL), and 275-295 (FGYS…DHYL).

Belongs to the UbiA prenyltransferase family. Protoheme IX farnesyltransferase subfamily.

Its subcellular location is the cell inner membrane. It carries out the reaction heme b + (2E,6E)-farnesyl diphosphate + H2O = Fe(II)-heme o + diphosphate. Its pathway is porphyrin-containing compound metabolism; heme O biosynthesis; heme O from protoheme: step 1/1. In terms of biological role, converts heme B (protoheme IX) to heme O by substitution of the vinyl group on carbon 2 of heme B porphyrin ring with a hydroxyethyl farnesyl side group. The chain is Protoheme IX farnesyltransferase from Nitrosococcus oceani (strain ATCC 19707 / BCRC 17464 / JCM 30415 / NCIMB 11848 / C-107).